The primary structure comprises 205 residues: Arginine exporter protein ArgO (205 aa).

Helical transmembrane passes span 1–21 (MLAV…PLGP), 42–62 (LCAL…SALL), 67–87 (LLLA…GWGA), 111–131 (IIVT…DTFV), 147–167 (WFAF…ALLA), and 182–202 (VINL…ARQG).

This sequence belongs to the LysE/ArgO transporter (TC 2.A.75) family.

It localises to the cell inner membrane. It catalyses the reaction L-arginine(in) = L-arginine(out). Involved in the export of arginine. Important to control the intracellular level of arginine and the correct balance between arginine and lysine. This chain is Arginine exporter protein ArgO, found in Yersinia enterocolitica serotype O:8 / biotype 1B (strain NCTC 13174 / 8081).